The primary structure comprises 316 residues: Transaldolase (316 aa).

K132 serves as the catalytic Schiff-base intermediate with substrate.

The protein belongs to the transaldolase family. Type 1 subfamily. As to quaternary structure, homodimer.

Its subcellular location is the cytoplasm. The catalysed reaction is D-sedoheptulose 7-phosphate + D-glyceraldehyde 3-phosphate = D-erythrose 4-phosphate + beta-D-fructose 6-phosphate. The protein operates within carbohydrate degradation; pentose phosphate pathway; D-glyceraldehyde 3-phosphate and beta-D-fructose 6-phosphate from D-ribose 5-phosphate and D-xylulose 5-phosphate (non-oxidative stage): step 2/3. Transaldolase is important for the balance of metabolites in the pentose-phosphate pathway. The protein is Transaldolase of Aliivibrio fischeri (strain ATCC 700601 / ES114) (Vibrio fischeri).